We begin with the raw amino-acid sequence, 604 residues long: MCRHQPRARLSPDEQLAAEESFALYCKPVELYNIIQRRSIKNPAFLQRCLLYKIHARRKKRSLITISLSGGTNKELRAQNIFPLYVLLARPTNNVSLEGHSPIYRFSRACLLTSFHEFGNKDYTEATFVIPDVKNLATSRACSLNIILISCGRAEQTFDDNNCSGNHVEGSTLQKLEGKCFWGKIPIDLLASSLGNCVSLSLGHTVEMSSTVEMTPSFLEPKFLEDDSCLTFCSQKVDATGSFQLQVSISAQEAGAKDMSESPYSVYSYNDVPPSSLTHIIRLRSGNVLFNYKYYNNTMQKTEVTEDFSCPFCLVPCGSFKGLGCHLNASHDLFHYEFWISEECQAVNVSLKTDSWRTELLAEGVDPRHQTFSYRSRFKKRKRVEISSDKIRHVHPHIVDSGSPEDAQAGSEDDYVQRENGSSVAHASVDPANSLHGSNLSAPTVLQFGKTRKLSVERADPRNRQLLQKRQFFHSHRAQPMALEQVFSDRDSEDEVDDDIADFEDRRMLDDFVDVTKDEKLIMHMWNSFVRKQRVLADGHIPWACEAFSQFHGQELVQNPALLWCWRFFMVKLWNHSLLDARAMNACNTILEGYLNGSSDPKKN.

The C2H2-type zinc-finger motif lies at 310–331; the sequence is CPFCLVPCGSFKGLGCHLNASH. Residues 396 to 440 are disordered; the sequence is PHIVDSGSPEDAQAGSEDDYVQRENGSSVAHASVDPANSLHGSNL. The VEFS-box stretch occupies residues 454–589; sequence LSVERADPRN…DARAMNACNT (136 aa).

Belongs to the VEFS (VRN2-EMF2-FIS2-SU(Z)12) family. In terms of assembly, component of the polycomb repressive complex 2 (PRC2), composed of the core PRC2 components FIE2, EZ1 and CLF. PRC2 methylates 'Lys-27' residues of histone H3 (H3K27me3), leading to transcriptional repression of the affected target gene. Widely expressed.

Its function is as follows. Polycomb group (PcG) protein. PcG proteins act by forming multiprotein complexes, which are required to maintain the transcriptionally repressive state of homeotic genes throughout development. PcG proteins are not required to initiate repression, but to maintain it during later stages of development. They act via the methylation of histones, rendering chromatin heritably changed in its expressibility. Polycomb group (PcG) protein involved in the repression of flowering under long day (LD) conditions. Regulates floret development. In Oryza sativa subsp. japonica (Rice), this protein is Polycomb group protein EMF2B.